The chain runs to 1055 residues: DNA-directed RNA polymerase subunit beta' (1055 aa).

Residues Cys60, Cys62, Cys75, and Cys78 each contribute to the Zn(2+) site. Residues Asp449, Asp451, and Asp453 each contribute to the Mg(2+) site. Positions 818, 892, 899, and 902 each coordinate Zn(2+).

Belongs to the RNA polymerase beta' chain family. As to quaternary structure, the RNAP catalytic core consists of 2 alpha, 1 beta, 1 beta' and 1 omega subunit. When a sigma factor is associated with the core the holoenzyme is formed, which can initiate transcription. It depends on Mg(2+) as a cofactor. The cofactor is Zn(2+).

The catalysed reaction is RNA(n) + a ribonucleoside 5'-triphosphate = RNA(n+1) + diphosphate. Its function is as follows. DNA-dependent RNA polymerase catalyzes the transcription of DNA into RNA using the four ribonucleoside triphosphates as substrates. The polypeptide is DNA-directed RNA polymerase subunit beta' (Pediococcus acidilactici).